The chain runs to 647 residues: A-type voltage-gated potassium channel KCND1 (647 aa).

Over 1–183 (MAAGLATWLP…RAFENPHTST (183 aa)) the chain is Cytoplasmic. The interval 2–20 (AAGLATWLPFARAAAVGWL) is interaction with KCNIP1, KCNIP2, and other family members. The Zn(2+) site is built by His104, Cys131, and Cys132. Residues 144–163 (AERLAEDEEAEQAGDGPALP) form a disordered region. A helical membrane pass occupies residues 184–205 (AALVFYYVTGFFIAVSVIANVV). Residues 206–230 (ETIPCRGSARRSSREQPCGERFPQA) lie on the Extracellular side of the membrane. The helical transmembrane segment at 231–252 (FFCMDTACVLIFTGEYLLRLFA) threads the bilayer. The Cytoplasmic segment spans residues 253–263 (APSRCRFLRSV). A helical membrane pass occupies residues 264–284 (MSLIDVVAILPYYIGLLVPKN). Residues 285-287 (DDV) are Extracellular-facing. Residues 288-308 (SGAFVTLRVFRVFRIFKFSRH) form a helical; Voltage-sensor membrane-spanning segment. The Cytoplasmic portion of the chain corresponds to 309 to 323 (SQGLRILGYTLKSCA). Residues 310–323 (QGLRILGYTLKSCA) form an S4-S5 linker region. A helical transmembrane segment spans residues 324 to 345 (SELGFLLFSLTMAIIIFATVMF). At 346–359 (YAEKGTNKTNFTSI) the chain is on the extracellular side. N-linked (GlcNAc...) asparagine glycosylation is found at Asn352 and Asn355. Residues 360 to 371 (PAAFWYTIVTMT) constitute an intramembrane region (helical). The Selectivity filter motif lies at 372 to 377 (TLGYGD). The stretch at 372-379 (TLGYGDMV) is an intramembrane region. The Extracellular segment spans residues 380–386 (PSTIAGK). The helical transmembrane segment at 387 to 415 (IFGSICSLSGVLVIALPVPVIVSNFSRIY) threads the bilayer. Topologically, residues 416–647 (HQNQRADKRR…FPETVKISSL (232 aa)) are cytoplasmic. Residue Ser458 is modified to Phosphoserine. The interval 474–489 (FEQQHHHLLHCLEKTT) is required for dendritic targeting. Residues 506–524 (VSPGGRTSRSTSVSSQPVG) show a composition bias toward low complexity. The interval 506-531 (VSPGGRTSRSTSVSSQPVGPGSLLSS) is disordered. Ser555 bears the Phosphoserine mark. The disordered stretch occupies residues 601–634 (IPTPPANTPDESQPSSPGGGGRAGSTLRNSSLGT).

The protein belongs to the potassium channel family. D (Shal) (TC 1.A.1.2) subfamily. Kv4.1/KCND1 sub-subfamily. Component of heteromultimeric potassium channels. Identified in potassium channel complexes containing KCND1, KCND2, KCND3, KCNIP1, KCNIP2, KCNIP3, KCNIP4, DPP6 and DPP10. As to expression, widely expressed. Highly expressed in brain, in particular in cerebellum and thalamus; detected at lower levels in the other parts of the brain.

The protein resides in the cell membrane. The enzyme catalyses K(+)(in) = K(+)(out). In terms of biological role, A-type voltage-gated potassium channel that mediates transmembrane potassium transport in excitable membranes in the brain. Mediates A-type current I(SA) in suprachiasmatic nucleus (SCN) neurons. Exhibits a low-threshold A-type current with a hyperpolarized steady-state inactivation midpoint and the recovery process was steeply voltage-dependent, with recovery being markedly faster at more negative potentials. May regulates repetitive firing rates in the suprachiasmatic nucleus (SCN) neurons and circadian rhythms in neuronal excitability and behavior. Contributes to the regulation of the circadian rhythm of action potential firing in suprachiasmatic nucleus neurons, which regulates the circadian rhythm of locomotor activity. The regulatory subunit KCNIP1 modulates the kinetics of channel inactivation, increases the current amplitudes and accelerates recovery from inactivation, shifts activation in a depolarizing direction. The regulatory subunit DPP10 decreases the voltage sensitivity of the inactivation channel gating. This chain is A-type voltage-gated potassium channel KCND1, found in Homo sapiens (Human).